A 551-amino-acid polypeptide reads, in one-letter code: Glucose-6-phosphate isomerase 2 (551 aa).

E359 functions as the Proton donor in the catalytic mechanism. Active-site residues include H390 and K514.

Belongs to the GPI family.

The protein resides in the cytoplasm. It carries out the reaction alpha-D-glucose 6-phosphate = beta-D-fructose 6-phosphate. Its pathway is carbohydrate biosynthesis; gluconeogenesis. It participates in carbohydrate degradation; glycolysis; D-glyceraldehyde 3-phosphate and glycerone phosphate from D-glucose: step 2/4. In terms of biological role, catalyzes the reversible isomerization of glucose-6-phosphate to fructose-6-phosphate. This chain is Glucose-6-phosphate isomerase 2, found in Streptomyces coelicolor (strain ATCC BAA-471 / A3(2) / M145).